The sequence spans 96 residues: Accessory cholera enterotoxin (96 aa).

The helical transmembrane segment at 76 to 96 (QALAIVLQALMTRFALRALNL) threads the bilayer.

The protein resides in the secreted. Its subcellular location is the host cell membrane. Increases short-circuit current in rabbit ileal tissue mounted in Ussing chambers, by increasing the potential difference. Cultures of V.cholerae containing the cloned ace gene cause fluid secretion in ligated rabbit ileal loops. In Vibrio cholerae serotype O1 (strain ATCC 39315 / El Tor Inaba N16961), this protein is Accessory cholera enterotoxin (ace).